Here is a 160-residue protein sequence, read N- to C-terminus: Peptide methionine sulfoxide reductase MsrA (160 aa).

Residue Cys11 is part of the active site.

It belongs to the MsrA Met sulfoxide reductase family.

It catalyses the reaction L-methionyl-[protein] + [thioredoxin]-disulfide + H2O = L-methionyl-(S)-S-oxide-[protein] + [thioredoxin]-dithiol. It carries out the reaction [thioredoxin]-disulfide + L-methionine + H2O = L-methionine (S)-S-oxide + [thioredoxin]-dithiol. In terms of biological role, has an important function as a repair enzyme for proteins that have been inactivated by oxidation. Catalyzes the reversible oxidation-reduction of methionine sulfoxide in proteins to methionine. The polypeptide is Peptide methionine sulfoxide reductase MsrA (Malacoplasma penetrans (strain HF-2) (Mycoplasma penetrans)).